The primary structure comprises 391 residues: Chaperone protein DnaJ (391 aa).

A J domain is found at 6 to 70 (DYYEILEVSR…EKRKLYDTYG (65 aa)). Residues 145–226 (GCIKNVKYTR…CKSRRMVDEV (82 aa)) form a CR-type zinc finger. Zn(2+) is bound by residues cysteine 158, cysteine 161, cysteine 174, cysteine 177, cysteine 200, cysteine 203, cysteine 214, and cysteine 217. 4 CXXCXGXG motif repeats span residues 158–165 (CPDCNGSG), 174–181 (CSDCNGEG), 200–207 (CPSCKGEG), and 214–221 (CKKCKSRR).

This sequence belongs to the DnaJ family. As to quaternary structure, homodimer. Zn(2+) serves as cofactor.

Its subcellular location is the cytoplasm. Functionally, participates actively in the response to hyperosmotic and heat shock by preventing the aggregation of stress-denatured proteins and by disaggregating proteins, also in an autonomous, DnaK-independent fashion. Unfolded proteins bind initially to DnaJ; upon interaction with the DnaJ-bound protein, DnaK hydrolyzes its bound ATP, resulting in the formation of a stable complex. GrpE releases ADP from DnaK; ATP binding to DnaK triggers the release of the substrate protein, thus completing the reaction cycle. Several rounds of ATP-dependent interactions between DnaJ, DnaK and GrpE are required for fully efficient folding. Also involved, together with DnaK and GrpE, in the DNA replication of plasmids through activation of initiation proteins. In Mycoplasmoides gallisepticum (strain R(low / passage 15 / clone 2)) (Mycoplasma gallisepticum), this protein is Chaperone protein DnaJ.